Reading from the N-terminus, the 404-residue chain is Cysteine desulfurase IscS (404 aa).

Residues 75-76, asparagine 155, glutamine 183, and 203-205 contribute to the pyridoxal 5'-phosphate site; these read AT and SGH. An N6-(pyridoxal phosphate)lysine modification is found at lysine 206. Threonine 243 contributes to the pyridoxal 5'-phosphate binding site. The active-site Cysteine persulfide intermediate is the cysteine 328. Cysteine 328 provides a ligand contact to [2Fe-2S] cluster.

Belongs to the class-V pyridoxal-phosphate-dependent aminotransferase family. NifS/IscS subfamily. Homodimer. Forms a heterotetramer with IscU, interacts with other sulfur acceptors. Pyridoxal 5'-phosphate is required as a cofactor.

It is found in the cytoplasm. It carries out the reaction (sulfur carrier)-H + L-cysteine = (sulfur carrier)-SH + L-alanine. It functions in the pathway cofactor biosynthesis; iron-sulfur cluster biosynthesis. Functionally, master enzyme that delivers sulfur to a number of partners involved in Fe-S cluster assembly, tRNA modification or cofactor biosynthesis. Catalyzes the removal of elemental sulfur atoms from cysteine to produce alanine. Functions as a sulfur delivery protein for Fe-S cluster synthesis onto IscU, an Fe-S scaffold assembly protein, as well as other S acceptor proteins. The sequence is that of Cysteine desulfurase IscS from Shewanella baltica (strain OS155 / ATCC BAA-1091).